The following is a 251-amino-acid chain: HTH-type transcriptional regulator UlaR (251 aa).

The HTH deoR-type domain occupies 3 to 58 (EAQRHQILLDMLAQLGFVTVENVIERLGISPATARRDINKLDESGKLKKVRNGAEA). A DNA-binding region (H-T-H motif) is located at residues 20-39 (VTVENVIERLGISPATARRD).

The protein localises to the cytoplasm. In terms of biological role, represses ulaG and the ulaABCDEF operon. The protein is HTH-type transcriptional regulator UlaR of Salmonella agona (strain SL483).